The sequence spans 100 residues: Small ribosomal subunit protein uS14c (100 aa).

Belongs to the universal ribosomal protein uS14 family. Part of the 30S ribosomal subunit.

The protein localises to the plastid. It localises to the chloroplast. Binds 16S rRNA, required for the assembly of 30S particles. The protein is Small ribosomal subunit protein uS14c of Amborella trichopoda.